A 512-amino-acid polypeptide reads, in one-letter code: NAD(P)H-quinone oxidoreductase chain 4, chloroplastic (512 aa).

A run of 14 helical transmembrane segments spans residues 4 to 24 (LPWL…IPFI), 34 to 54 (WYAL…FGYH), 87 to 107 (MPLV…AWPV), 111 to 131 (AKLF…VFVS), 134 to 154 (LLLF…LLLV), 167 to 187 (FILY…TMAF), 210 to 230 (ILLY…FPLH), 241 to 261 (HYST…YALI), 273 to 293 (LIFA…AALT), 312 to 332 (MGFV…GAVL), 333 to 353 (QMIS…TTYD), 373 to 395 (TFAM…GFVA), 416 to 436 (IITF…LSML), and 462 to 482 (IFVI…PKMA).

Belongs to the complex I subunit 4 family.

Its subcellular location is the plastid. The protein resides in the chloroplast thylakoid membrane. It catalyses the reaction a plastoquinone + NADH + (n+1) H(+)(in) = a plastoquinol + NAD(+) + n H(+)(out). It carries out the reaction a plastoquinone + NADPH + (n+1) H(+)(in) = a plastoquinol + NADP(+) + n H(+)(out). In Chlorokybus atmophyticus (Soil alga), this protein is NAD(P)H-quinone oxidoreductase chain 4, chloroplastic.